The primary structure comprises 742 residues: Zinc finger MYND domain-containing protein 15 (742 aa).

Positions 109–199 (LEDGEEGEEE…QKRKGQRSEA (91 aa)) are disordered. Acidic residues predominate over residues 110–127 (EDGEEGEEEEEEDEEEEK). Residues 151–161 (SRESPQETNPP) show a composition bias toward polar residues. Residues 166–189 (EAAREAGGGKDGCREDRVENETRP) are compositionally biased toward basic and acidic residues. 8 residues coordinate Zn(2+): Cys-313, Cys-316, Cys-328, Cys-331, Cys-337, Cys-341, His-355, and Cys-359. The segment at 313 to 359 (CHVCHRHSFEAKLTPCPQCSAVLYCGEACLRADWQRCPDDVSHRFWC) adopts an MYND-type zinc-finger fold. Disordered stretches follow at residues 565-590 (EVSV…GRRD) and 701-742 (QGSG…RRRK). A compositionally biased stretch (pro residues) spans 708-724 (APGPPPPSPTPSAPPAP). Basic residues predominate over residues 725 to 742 (TRRRRGEKKPGRGARRRK).

Interacts with HDAC1, HDAC3, HDAC6 and, to a lesser extent, with HDAC7.

Its subcellular location is the nucleus. It is found in the cytoplasm. Its function is as follows. Acts as a transcriptional repressor through interaction with histone deacetylases (HDACs). May be important for spermiogenesis. The polypeptide is Zinc finger MYND domain-containing protein 15 (ZMYND15) (Homo sapiens (Human)).